The primary structure comprises 369 residues: Ribosomal RNA large subunit methyltransferase M (369 aa).

Residues Ser198, 231–234, Asp250, Asp270, and Asp287 contribute to the S-adenosyl-L-methionine site; that span reads APGG. The active-site Proton acceptor is Lys316.

This sequence belongs to the class I-like SAM-binding methyltransferase superfamily. RNA methyltransferase RlmE family. RlmM subfamily. In terms of assembly, monomer.

It localises to the cytoplasm. It catalyses the reaction cytidine(2498) in 23S rRNA + S-adenosyl-L-methionine = 2'-O-methylcytidine(2498) in 23S rRNA + S-adenosyl-L-homocysteine + H(+). Functionally, catalyzes the 2'-O-methylation at nucleotide C2498 in 23S rRNA. In Idiomarina loihiensis (strain ATCC BAA-735 / DSM 15497 / L2-TR), this protein is Ribosomal RNA large subunit methyltransferase M.